A 112-amino-acid polypeptide reads, in one-letter code: UPF0122 protein CPR_1686 (112 aa).

It belongs to the UPF0122 family.

In terms of biological role, might take part in the signal recognition particle (SRP) pathway. This is inferred from the conservation of its genetic proximity to ftsY/ffh. May be a regulatory protein. The protein is UPF0122 protein CPR_1686 of Clostridium perfringens (strain SM101 / Type A).